Reading from the N-terminus, the 718-residue chain is Catalase (718 aa).

Active-site residues include His103 and Asn176. Tyr390 is a heme binding site.

Belongs to the catalase family. The cofactor is heme.

It is found in the peroxisome matrix. The catalysed reaction is 2 H2O2 = O2 + 2 H2O. Its function is as follows. Catalyzes the degradation of hydrogen peroxide (H(2)O(2)) generated by peroxisomal oxidases to water and oxygen, thereby protecting cells from the toxic effects of hydrogen peroxide. The polypeptide is Catalase (CAT1) (Blumeria hordei (Barley powdery mildew)).